The following is a 222-amino-acid chain: Histidinol-phosphatase (222 aa).

D8 serves as the catalytic Nucleophile. Mg(2+)-binding residues include D8, D10, and D184. D10 (proton donor) is an active-site residue.

It belongs to the HAD-like hydrolase superfamily. SerB family. Mg(2+) is required as a cofactor.

The enzyme catalyses L-histidinol phosphate + H2O = L-histidinol + phosphate. It participates in amino-acid biosynthesis; L-histidine biosynthesis; L-histidine from 5-phospho-alpha-D-ribose 1-diphosphate: step 8/9. Catalyzes the dephosphorylation of histidinol-phosphate to histidinol, the direct precursor of histidine. In Neisseria meningitidis serogroup C (strain 8013), this protein is Histidinol-phosphatase.